Consider the following 612-residue polypeptide: Glutamine--fructose-6-phosphate aminotransferase [isomerizing] (612 aa).

Cys2 (nucleophile; for GATase activity) is an active-site residue. The region spanning 2 to 219 is the Glutamine amidotransferase type-2 domain; it reads CGIVGANSTR…EGDIAIISKD (218 aa). SIS domains follow at residues 287-427 and 460-602; these read AKEL…LKNS and ISEY…VDQP. Lys607 acts as the For Fru-6P isomerization activity in catalysis.

In terms of assembly, homodimer.

The protein localises to the cytoplasm. The catalysed reaction is D-fructose 6-phosphate + L-glutamine = D-glucosamine 6-phosphate + L-glutamate. Its function is as follows. Catalyzes the first step in hexosamine metabolism, converting fructose-6P into glucosamine-6P using glutamine as a nitrogen source. This Francisella tularensis subsp. tularensis (strain SCHU S4 / Schu 4) protein is Glutamine--fructose-6-phosphate aminotransferase [isomerizing].